The primary structure comprises 131 residues: Small ribosomal subunit protein uS9 (131 aa).

Belongs to the universal ribosomal protein uS9 family.

This is Small ribosomal subunit protein uS9 from Mesoplasma florum (strain ATCC 33453 / NBRC 100688 / NCTC 11704 / L1) (Acholeplasma florum).